A 613-amino-acid chain; its full sequence is Zinc finger protein 665 (613 aa).

18 consecutive C2H2-type zinc fingers follow at residues 113–135, 141–163, 169–191, 197–219, 225–247, 253–275, 281–303, 309–331, 337–359, 365–387, 393–415, 421–443, 449–471, 477–499, 505–527, 533–555, 561–583, and 589–611; these read YKCD…KRIH, YRCN…QVIH, YKCN…QRIH, YKCN…QVIH, YKCN…RRIH, YKCN…QTIH, YKCN…RRVH, YKCN…QIIH, FKCN…RRIH, YRCD…QAIH, YKCN…RGIH, YKCD…WRVH, and YRCN…MAIH.

This sequence belongs to the krueppel C2H2-type zinc-finger protein family.

Its subcellular location is the nucleus. May be involved in transcriptional regulation. This chain is Zinc finger protein 665 (ZNF665), found in Pongo abelii (Sumatran orangutan).